The chain runs to 207 residues: 3-isopropylmalate dehydratase small subunit (207 aa).

It belongs to the LeuD family. LeuD type 1 subfamily. Heterodimer of LeuC and LeuD.

The enzyme catalyses (2R,3S)-3-isopropylmalate = (2S)-2-isopropylmalate. Its pathway is amino-acid biosynthesis; L-leucine biosynthesis; L-leucine from 3-methyl-2-oxobutanoate: step 2/4. Catalyzes the isomerization between 2-isopropylmalate and 3-isopropylmalate, via the formation of 2-isopropylmaleate. The protein is 3-isopropylmalate dehydratase small subunit (leuD) of Buchnera aphidicola subsp. Acyrthosiphon pisum (strain APS) (Acyrthosiphon pisum symbiotic bacterium).